The sequence spans 366 residues: Isocitrate dehydrogenase [NAD] subunit alpha, mitochondrial (366 aa).

The transit peptide at 1-27 directs the protein to the mitochondrion; the sequence is MAGPAWISKVSRLLGAFHNQKQVTRGF. Lys77 carries the N6-succinyllysine modification. At Thr101 the chain carries Phosphothreonine. Positions 115, 125, and 146 each coordinate substrate. The residue at position 223 (Lys223) is an N6-acetyllysine. Residues Asp233, Asp257, and Asp261 each contribute to the Mg(2+) site. Lys343 carries the post-translational modification N6-acetyllysine; alternate. Lys343 carries the post-translational modification N6-succinyllysine; alternate. Lys350 bears the N6-succinyllysine mark.

It belongs to the isocitrate and isopropylmalate dehydrogenases family. As to quaternary structure, heterooligomer of subunits alpha (IDH3A), beta (IDH3B), and gamma (IDH3G) in the apparent ratio of 2:1:1. The heterodimer containing one IDH3A and one IDH3B subunit and the heterodimer containing one IDH3A and one IDH3G subunit assemble into a heterotetramer (which contains two subunits of IDH3A, one of IDH3B and one of IDH3G) and further into the heterooctamer. Requires Mg(2+) as cofactor. It depends on Mn(2+) as a cofactor.

It is found in the mitochondrion. The catalysed reaction is D-threo-isocitrate + NAD(+) = 2-oxoglutarate + CO2 + NADH. Its activity is regulated as follows. The heterotetramer and the heterodimer composed of IDH3A and IDH3G subunits can be allosterically activated by citrate (CIT) or/and ADP, and the two activators can act independently or synergistically. The heterodimer composed of IDH3A and IDH3B subunits cannot be allosterically regulated and the allosteric regulation of the heterotetramer is through the IDH3G subunit and not the IDH3B subunit. The IDH3G subunit contains the allosteric site which consists of a CIT-binding site and an ADP-binding site, and the binding of CIT and ADP causes conformational changes at the allosteric site which are transmitted to the active site in the catalytic subunit (IDH3A) through a cascade of conformational changes at the heterodimer interface, leading to stabilization of the isocitrate-binding at the active site and thus activation of the enzyme. ATP can activate the heterotetramer and the heterodimer composed of IDH3A and IDH3G subunits at low concentrations but inhibits their activities at high concentrations, whereas ATP exhibits only inhibitory effect on the heterodimer composed of IDH3A and IDH3B subunits. Catalytic subunit of the enzyme which catalyzes the decarboxylation of isocitrate (ICT) into alpha-ketoglutarate. The heterodimer composed of the alpha (IDH3A) and beta (IDH3B) subunits and the heterodimer composed of the alpha (IDH3A) and gamma (IDH3G) subunits, have considerable basal activity but the full activity of the heterotetramer (containing two subunits of IDH3A, one of IDH3B and one of IDH3G) requires the assembly and cooperative function of both heterodimers. In Bos taurus (Bovine), this protein is Isocitrate dehydrogenase [NAD] subunit alpha, mitochondrial.